Consider the following 145-residue polypeptide: Nickel-responsive regulator (145 aa).

Residues His-77, His-88, His-90, and Cys-96 each contribute to the Ni(2+) site.

The protein belongs to the transcriptional regulatory CopG/NikR family. As to quaternary structure, homotetramer. It depends on Ni(2+) as a cofactor.

Its function is as follows. Transcriptional repressor of the nikABCDE operon. Is active in the presence of excessive concentrations of intracellular nickel. The protein is Nickel-responsive regulator of Edwardsiella ictaluri (strain 93-146).